A 368-amino-acid polypeptide reads, in one-letter code: L-cysteine desulfhydrase Cds1 (368 aa).

At Lys67 the chain carries N6-(pyridoxal phosphate)lysine. Pyridoxal 5'-phosphate contacts are provided by residues 203 to 207 (GTGGT) and Ser299.

This sequence belongs to the cysteine synthase/cystathionine beta-synthase family. Cds1 subfamily. The cofactor is pyridoxal 5'-phosphate.

It localises to the cytoplasm. It catalyses the reaction L-cysteine + H2O = hydrogen sulfide + pyruvate + NH4(+) + H(+). In terms of biological role, a cysteine desulfhydrase that generates hydrogen sulfide, H(2)S. The H(2)S produced by this enzyme stimulates respiration in M.tuberculosis, mediated primarily via cytochrome bd with a lesser contribution from cytochrome bc1/aa3. H(2)S modulates the balance between respiration and glycolysis, and also contributes to redox homeostasis. Probably eliminates toxic levels of Cys (which can induce oxidative stress). The polypeptide is L-cysteine desulfhydrase Cds1 (Mycobacterium tuberculosis (strain ATCC 25177 / H37Ra)).